The sequence spans 352 residues: Histidine biosynthesis bifunctional protein HisB (352 aa).

The histidinol-phosphatase stretch occupies residues 1-164 (MSQKILFIDR…EIENEILSSF (164 aa)). Asp-9 serves as the catalytic Nucleophile. Residues Asp-9 and Asp-11 each coordinate Mg(2+). The active-site Proton donor is the Asp-11. The Zn(2+) site is built by Cys-93, His-95, Cys-101, and Cys-103. Asp-130 is a Mg(2+) binding site. The interval 165 to 352 (RSASYQRTTK…ENLASSKGVI (188 aa)) is imidazoleglycerol-phosphate dehydratase.

In the N-terminal section; belongs to the histidinol-phosphatase family. The protein in the C-terminal section; belongs to the imidazoleglycerol-phosphate dehydratase family. Mg(2+) is required as a cofactor. Requires Zn(2+) as cofactor.

The protein localises to the cytoplasm. The enzyme catalyses D-erythro-1-(imidazol-4-yl)glycerol 3-phosphate = 3-(imidazol-4-yl)-2-oxopropyl phosphate + H2O. It carries out the reaction L-histidinol phosphate + H2O = L-histidinol + phosphate. It participates in amino-acid biosynthesis; L-histidine biosynthesis; L-histidine from 5-phospho-alpha-D-ribose 1-diphosphate: step 6/9. The protein operates within amino-acid biosynthesis; L-histidine biosynthesis; L-histidine from 5-phospho-alpha-D-ribose 1-diphosphate: step 8/9. The chain is Histidine biosynthesis bifunctional protein HisB from Campylobacter jejuni subsp. jejuni serotype O:23/36 (strain 81-176).